We begin with the raw amino-acid sequence, 229 residues long: UPF0488 protein C8orf33 (229 aa).

Residues 1–16 (MAALGHLAGEAAAAPG) show a composition bias toward low complexity. The interval 1–96 (MAALGHLAGE…GEKASEKLAP (96 aa)) is disordered. Alanine 2 is modified (N-acetylalanine). The residue at position 27 (arginine 27) is an Omega-N-methylarginine. The span at 69–79 (KKQKNKKKTRN) shows a compositional bias: basic residues. Phosphoserine is present on serine 82.

Belongs to the UPF0488 family.

The protein is UPF0488 protein C8orf33 (C8orf33) of Homo sapiens (Human).